A 421-amino-acid polypeptide reads, in one-letter code: 4-hydroxy-3-methylbut-2-en-1-yl diphosphate synthase (flavodoxin) (421 aa).

[4Fe-4S] cluster contacts are provided by C300, C303, C346, and E353.

The protein belongs to the IspG family. [4Fe-4S] cluster serves as cofactor.

The catalysed reaction is (2E)-4-hydroxy-3-methylbut-2-enyl diphosphate + oxidized [flavodoxin] + H2O + 2 H(+) = 2-C-methyl-D-erythritol 2,4-cyclic diphosphate + reduced [flavodoxin]. The protein operates within isoprenoid biosynthesis; isopentenyl diphosphate biosynthesis via DXP pathway; isopentenyl diphosphate from 1-deoxy-D-xylulose 5-phosphate: step 5/6. In terms of biological role, converts 2C-methyl-D-erythritol 2,4-cyclodiphosphate (ME-2,4cPP) into 1-hydroxy-2-methyl-2-(E)-butenyl 4-diphosphate. The protein is 4-hydroxy-3-methylbut-2-en-1-yl diphosphate synthase (flavodoxin) of Laribacter hongkongensis (strain HLHK9).